The primary structure comprises 594 residues: Arginine--tRNA ligase (594 aa).

The 'HIGH' region signature appears at 139 to 149; it reads ANPTGPLHVGH.

This sequence belongs to the class-I aminoacyl-tRNA synthetase family. As to quaternary structure, monomer.

It localises to the cytoplasm. It carries out the reaction tRNA(Arg) + L-arginine + ATP = L-arginyl-tRNA(Arg) + AMP + diphosphate. This is Arginine--tRNA ligase from Burkholderia mallei (strain NCTC 10247).